The following is a 1141-amino-acid chain: MSKKFAEYSQFDLSKVNKDVLKKWDENQVFAKSMTEREGCPSFVFFEGPPSANGMPGIHHVMARSIKDIFCRYKTMKGYQVKRKAGWDTHGLPVELGVEKSLGITKEDIGKTISVAEYNAHCRQDVMKFTKEWEDLTHKMGYWVDMKHPYITYDNRYIETLWWLLKQLYKKGLLYKGYTIQPYSPAAGTGLSSHELNQPGCYRDVKDTTVVAQFKMKNPKPEMAQWGTPYFLAWTTTPWTLPSNTALCVGPKIDYVAVQSYNAYTGQPITVVLAKALLNAHFNPKAAELKLEDYKAGDKLVPFKVIAEYKGPDLVGMEYEQLIPWVNPGEGAFRVILGDYVTTEDGTGIVHIAPTFGADDAQVAKAAGIPPLQLVNKKGELRPMVDLTGKFYTLDELDEDFIKQRVNVDLYKEYAGRFVKNAYDPNLSDQDESLDVSICMMMKVNNQAFKIEKHVHNYPHCWRTDKPVLYYPLDSWFIRSTACKERMIELNKTINWKPESTGTGRFGKWLENLNDWNLSRSRYWGTPLPIWRTEDNSDEKCIESVEELYNEIEKSVAAGYMQSNPYKDKGFVPGEYNEENYNKIDLHRPYVDDIILVSKDGKPMKREADLIDVWFDSGAMPYAQIHYPFENKELLDSHQVYPADFIAEGVDQTRGWFFTLHAIATMVFDSVSYKAVISNGLVLDKNGNKMSKRLGNAVDPFSTIEQYGSDPLRWYMITNSSPWDNLKFDVDGIEEVRRKFFGTLYNTYSFFALYANVDGFEYKEADLPMNERPEIDRWILSVLNTLVKEVDTCYNEYEPTKAGRLISDFVNDNLSNWYVRLNRKRFWGGGFTQDKLSAYQTLYTCLETVAKLMAPIAPFYADRLYSDLIGVTGRDNVVSVHLAKFPEYNEKMVDKELEAQMQMAQDVTSMVLALRRKVNIKVRQPLQCIMIPVVDEVQKAHIEAVKALIMSEVNVKEIKFVDGAAGVLVKKVKCDFKKLGPKFGKQMKAVAAAVAEMSQEAIAELEKNGKYTFDLGGAEAVIESADVEIFSEDIPGWLVANEGKLTVALEVTVTDELRREGIARELVNRIQNIRKSSGFEITDKIKLTLSKNPQTDDAVNEYNSYICNQVLGTSLTLADEVKDGTELNFDDFSLFVNVVKE.

The 'HIGH' region motif lies at 50–60 (PSANGMPGIHH). Positions 689-693 (KMSKR) match the 'KMSKS' region motif. Position 692 (lysine 692) interacts with ATP.

This sequence belongs to the class-I aminoacyl-tRNA synthetase family. IleS type 2 subfamily. In terms of assembly, monomer. Zn(2+) is required as a cofactor.

The protein resides in the cytoplasm. The enzyme catalyses tRNA(Ile) + L-isoleucine + ATP = L-isoleucyl-tRNA(Ile) + AMP + diphosphate. Functionally, catalyzes the attachment of isoleucine to tRNA(Ile). As IleRS can inadvertently accommodate and process structurally similar amino acids such as valine, to avoid such errors it has two additional distinct tRNA(Ile)-dependent editing activities. One activity is designated as 'pretransfer' editing and involves the hydrolysis of activated Val-AMP. The other activity is designated 'posttransfer' editing and involves deacylation of mischarged Val-tRNA(Ile). The polypeptide is Isoleucine--tRNA ligase (Bacteroides fragilis (strain ATCC 25285 / DSM 2151 / CCUG 4856 / JCM 11019 / LMG 10263 / NCTC 9343 / Onslow / VPI 2553 / EN-2)).